A 283-amino-acid polypeptide reads, in one-letter code: Putative cuticle collagen 79 (283 aa).

The disordered stretch occupies residues 59 to 283 (FKQQSSPPSP…ARSISKVAIQ (225 aa)). 3 triple-helical region regions span residues 94 to 122 (GPPGPPGEKGNDGVDGVDGIPGFPGENGG), 139 to 201 (GPRG…PGRK), and 204 to 269 (GEAG…DGAY). The span at 137–146 (PPGPRGPPGP) shows a compositional bias: pro residues. Positions 226 to 240 (TDGDDGVDGQPGDEG) are enriched in acidic residues. Residues 253–265 (PQGEQGTEGQPGT) are compositionally biased toward low complexity.

Belongs to the cuticular collagen family. As to quaternary structure, collagen polypeptide chains are complexed within the cuticle by disulfide bonds and other types of covalent cross-links.

Functionally, nematode cuticles are composed largely of collagen-like proteins. The cuticle functions both as an exoskeleton and as a barrier to protect the worm from its environment. In Caenorhabditis elegans, this protein is Putative cuticle collagen 79 (col-79).